Here is a 319-residue protein sequence, read N- to C-terminus: Olfactory receptor 56B4 (319 aa).

Residues 1 to 31 lie on the Extracellular side of the membrane; it reads MDTSTSVTYDSSLQISQFILMGLPGIHEWQH. The chain crosses the membrane as a helical span at residues 32-52; that stretch reads WLSLPLTLLYLLALGANLLII. Over 53 to 60 the chain is Cytoplasmic; the sequence is ITIQHETV. The chain crosses the membrane as a helical span at residues 61 to 81; it reads LHEPMYHLLGILAVVDIGLAT. Over 82–105 the chain is Extracellular; that stretch reads TIMPKILAIFWFDAKAISLPMCFA. Residues cysteine 103 and cysteine 195 are joined by a disulfide bond. The chain crosses the membrane as a helical span at residues 106–126; it reads QIYAIHCFFCIESGIFLCMAV. Residues 127–145 lie on the Cytoplasmic side of the membrane; that stretch reads DRYIAICRPLQYPSIVTKA. A helical membrane pass occupies residues 146 to 166; it reads FVFKATGFIMLRNGLLTIPVP. Residues 167–202 are Extracellular-facing; the sequence is ILAAQRHYCSRNEIEHCLCSNLGVISLACDDITVNK. The helical transmembrane segment at 203 to 223 threads the bilayer; sequence FYQLMLAWVLVGSDMALVFSS. Residues 224-243 lie on the Cytoplasmic side of the membrane; the sequence is YAVILHSVLRLNSAEAMSKA. The helical transmembrane segment at 244-263 threads the bilayer; the sequence is LSTCSSHLILILFHTGIIVL. At 264-277 the chain is on the extracellular side; that stretch reads SVTHLAEKKIPLIP. Residues 278–298 traverse the membrane as a helical segment; that stretch reads VFLNVLHNVIPPALNPLACAL. Residues 299-319 are Cytoplasmic-facing; it reads RMHKLRLGFQRLLGLGQDVSK.

The protein belongs to the G-protein coupled receptor 1 family.

Its subcellular location is the cell membrane. Functionally, odorant receptor. This chain is Olfactory receptor 56B4 (OR56B4), found in Homo sapiens (Human).